The primary structure comprises 122 residues: uncharacterized protein (122 aa).

The protein localises to the mitochondrion. This is an uncharacterized protein from Arabidopsis thaliana (Mouse-ear cress).